The sequence spans 78 residues: Defensin-like protein 90 (78 aa).

A signal peptide spans 1 to 25; sequence MTTKMFSYVLLHSLMMFAIILSSMG. Disulfide bonds link Cys33–Cys70, Cys38–Cys59, Cys44–Cys68, and Cys48–Cys69.

Belongs to the DEFL family.

It is found in the secreted. The protein is Defensin-like protein 90 of Arabidopsis thaliana (Mouse-ear cress).